Here is a 446-residue protein sequence, read N- to C-terminus: Glutamine synthetase (446 aa).

The 86-residue stretch at 18–103 (ENVRYLRLQF…LICDVYKTDG (86 aa)) folds into the GS beta-grasp domain. The GS catalytic domain maps to 110-446 (PRANLKRVLK…WERDQYMKQY (337 aa)). Residues Glu134 and Glu136 each contribute to the Mg(2+) site. Glu186 lines the ATP pocket. Mg(2+)-binding residues include Glu191 and Glu198. L-glutamate-binding positions include 242–243 (NG) and Gly243. His247 provides a ligand contact to Mg(2+). Ser251 is a binding site for ATP. Residues Arg300, Glu306, and Arg318 each coordinate L-glutamate. Residues Arg318 and Arg323 each coordinate ATP. Glu335 provides a ligand contact to Mg(2+). Residue Arg337 coordinates L-glutamate.

It belongs to the glutamine synthetase family. As to quaternary structure, oligomer of 12 subunits arranged in the form of two hexagons. In its feedback-inhibited form, interacts with TnrA in order to block its DNA-binding activity. The cofactor is Mg(2+).

It localises to the cytoplasm. The enzyme catalyses L-glutamate + NH4(+) + ATP = L-glutamine + ADP + phosphate + H(+). With respect to regulation, inhibited by glutamine. Glutamine synthetase (GS) is an unusual multitasking protein that functions as an enzyme, a transcription coregulator, and a chaperone in ammonium assimilation and in the regulation of genes involved in nitrogen metabolism. It catalyzes the ATP-dependent biosynthesis of glutamine from glutamate and ammonia. Feedback-inhibited GlnA also interacts with and regulates the activity of the transcriptional regulator TnrA. During nitrogen limitation, TnrA is in its DNA-binding active state and turns on the transcription of genes required for nitrogen assimilation. Under conditions of nitrogen excess, feedback-inhibited GlnA forms a stable complex with TnrA, which inhibits its DNA-binding activity. In contrast, feedback-inhibited GlnA acts as a chaperone to stabilize the DNA-binding activity of GlnR, which represses the transcription of nitrogen assimilation genes. In Staphylococcus aureus (strain MRSA252), this protein is Glutamine synthetase.